The sequence spans 273 residues: Dermonecrotic toxin LdSicTox-alphaIB1aii (273 aa).

The active site involves His5. The Mg(2+) site is built by Glu25 and Asp27. The Nucleophile role is filled by His41. Cystine bridges form between Cys45–Cys51 and Cys47–Cys190. Asp85 contacts Mg(2+). N-linked (GlcNAc...) asparagine glycosylation is present at Asn250.

Belongs to the arthropod phospholipase D family. Class II subfamily. The cofactor is Mg(2+). Expressed by the venom gland.

The protein resides in the secreted. The enzyme catalyses an N-(acyl)-sphingosylphosphocholine = an N-(acyl)-sphingosyl-1,3-cyclic phosphate + choline. It carries out the reaction an N-(acyl)-sphingosylphosphoethanolamine = an N-(acyl)-sphingosyl-1,3-cyclic phosphate + ethanolamine. The catalysed reaction is a 1-acyl-sn-glycero-3-phosphocholine = a 1-acyl-sn-glycero-2,3-cyclic phosphate + choline. It catalyses the reaction a 1-acyl-sn-glycero-3-phosphoethanolamine = a 1-acyl-sn-glycero-2,3-cyclic phosphate + ethanolamine. Functionally, dermonecrotic toxins cleave the phosphodiester linkage between the phosphate and headgroup of certain phospholipids (sphingolipid and lysolipid substrates), forming an alcohol (often choline) and a cyclic phosphate. This toxin acts on sphingomyelin (SM). It may also act on ceramide phosphoethanolamine (CPE), lysophosphatidylcholine (LPC) and lysophosphatidylethanolamine (LPE), but not on lysophosphatidylserine (LPS), and lysophosphatidylglycerol (LPG). It acts by transphosphatidylation, releasing exclusively cyclic phosphate products as second products. Induces dermonecrosis, hemolysis, increased vascular permeability, edema, inflammatory response, and platelet aggregation. The chain is Dermonecrotic toxin LdSicTox-alphaIB1aii from Loxosceles deserta (Desert recluse spider).